Reading from the N-terminus, the 261-residue chain is Insulin-like growth factor-binding protein-related protein 1 (261 aa).

Residues 1–17 (MWIPLLLVALVVPAIRC) form the signal peptide. The region spanning 18 to 101 (ERKCGECNPE…DPPEAMCVCL (84 aa)) is the IGFBP N-terminal domain. Cystine bridges form between C21–C45, C24–C47, C29–C48, C36–C51, C59–C82, C76–C98, C100–C118, and C107–C139. The Kazal-like domain occupies 70-141 (NRGHGPCGEY…RAMHRGPCKS (72 aa)). One can recognise an Ig-like C2-type domain in the interval 143–243 (PKITSPPEEA…GESSAAARVV (101 aa)). N154 carries an N-linked (GlcNAc...) asparagine glycan. C164 and C227 form a disulfide bridge.

Expressed by the venom gland.

The protein localises to the secreted. The protein is Insulin-like growth factor-binding protein-related protein 1 of Cupiennius salei (American wandering spider).